The following is a 95-amino-acid chain: Large ribosomal subunit protein eL30 (95 aa).

Belongs to the eukaryotic ribosomal protein eL30 family.

The sequence is that of Large ribosomal subunit protein eL30 from Methanospirillum hungatei JF-1 (strain ATCC 27890 / DSM 864 / NBRC 100397 / JF-1).